The chain runs to 166 residues: UPF0561 protein C2orf68 (166 aa).

The disordered stretch occupies residues 32-107; that stretch reads NQIARDDYDK…SELEPSGHQL (76 aa). 2 stretches are compositionally biased toward basic and acidic residues: residues 34-49 and 73-85; these read IARD…AAKE and RHRD…RNPD. Low complexity predominate over residues 91–104; the sequence is ESSSSGGSELEPSG.

It belongs to the UPF0561 family.

This chain is UPF0561 protein C2orf68 (C2orf68), found in Homo sapiens (Human).